Here is a 185-residue protein sequence, read N- to C-terminus: ATP-dependent protease subunit HslV (185 aa).

Residue Thr-14 is part of the active site. Na(+) is bound by residues Ala-168, Cys-171, and Thr-174.

It belongs to the peptidase T1B family. HslV subfamily. In terms of assembly, a double ring-shaped homohexamer of HslV is capped on each side by a ring-shaped HslU homohexamer. The assembly of the HslU/HslV complex is dependent on binding of ATP.

The protein localises to the cytoplasm. The enzyme catalyses ATP-dependent cleavage of peptide bonds with broad specificity.. Allosterically activated by HslU binding. Functionally, protease subunit of a proteasome-like degradation complex believed to be a general protein degrading machinery. This Hyphomonas neptunium (strain ATCC 15444) protein is ATP-dependent protease subunit HslV.